Consider the following 932-residue polypeptide: MERTLLNPPPSLRSPACRTTTATRIRPSSSMATMIPTPPPMRHARLVKASAAGRRELHAPPIAPPILLGLRSPAAASYGRASGGGGRRRGARVVARMGFDMFTDKAIKAIMMAQEEARRLGHHAAGSEQLLLGVIGEGTGIGAKVLRGAGLSLKAARAEVEKMAGRGPGMVPMEIKFTPAAKNVLQASQEEAHQLGHNYVGSEHLLLGLLREHGAALVVLKNFQADPSNIRSEVIRMISDTSEDHQPVSAAVGGGSSTTKIPTLLEYGTNLTKLAEEGKLDPVVGRQNQVDRVVQILGRRTKNNPCLIGEPGVGKTAIAEGLAQRIAAGNVPETIDGKTVITLDMGLLVAGTKYRGEFEERLKKLMDEVKQNGEIILFLDEVHTLVGAGAAEGAIDAANILKPALARGELQCIGATTIDEYRKHIEKDPALERRFQPVKVPEPTVDETIGILKGLRERYEIHHKVQYTDESLIAAARLSYQYISDRFLPDKAIDLVDEAGSLVRLRNAQLPDEAKELEKKLKKIMAEKSEAIRSQDFEKAGALRGEEVELKSEIMSLVDKSKEMSKAAVDSGESPGPTVTEADVQHIVSSWTGVPVEKVTVDESSRLLAMESSLHRRIVGQDEAVTAISRAIRRARVGLRDPRRPIASFIFAGPTGVGKSELAKALAAYYYGSPEAMVRLDMSEFMEKHTVAKLVGSPPGYVGYAEGGQLTEAIRRRPYAVVLFDEVEKAHPDVFNMMLQILDDGRLTDSKGRTVDFKNSLIIMTSNVGSGVIEKGGRQLGFAGDGSGDGGYGVIKNMVEEEMKRYFRPEFLNRLDEMIVFRQLTKLEVKEIAGIMLAEVTGRIGGKGIGLQVTERFKELVVEQGFDPSYGARPLRRAIMRLLEDTLTDKMLAGEICAGDSVIVDADGDGNVVVVGRRSAGLPDLKSPAFTV.

Residues M1 to T20 are disordered. A chloroplast-targeting transit peptide spans M1 to K48. A Clp R domain is found at F99 to D240. Repeat stretches follow at residues F102–G167 and F177–D240. An i region spans residues L264–P511. G309 to T316 is an ATP binding site. Positions E518–E553 constitute a UVR domain. Positions V579–S770 are II. G653–S660 is a binding site for ATP.

The protein belongs to the ClpA/ClpB family. ClpC subfamily.

Its subcellular location is the plastid. The protein resides in the chloroplast. Functionally, molecular chaperone that may interact with a ClpP-like protease involved in degradation of denatured proteins in the chloroplast. This chain is Chaperone protein ClpC3, chloroplastic (CLPC3), found in Oryza sativa subsp. japonica (Rice).